A 243-amino-acid polypeptide reads, in one-letter code: Peptidase E (243 aa).

Active-site charge relay system residues include S118, D133, and H155.

The protein belongs to the peptidase S51 family.

The protein resides in the cytoplasm. The catalysed reaction is Dipeptidase E catalyzes the hydrolysis of dipeptides Asp-|-Xaa. It does not act on peptides with N-terminal Glu, Asn or Gln, nor does it cleave isoaspartyl peptides.. Functionally, hydrolyzes dipeptides containing N-terminal aspartate residues. May play a role in allowing the cell to use peptide aspartate to spare carbon otherwise required for the synthesis of the aspartate family of amino acids. This Streptomyces coelicolor (strain ATCC BAA-471 / A3(2) / M145) protein is Peptidase E.